The chain runs to 660 residues: uncharacterized protein (660 aa).

The disordered stretch occupies residues 1–660; it reads MGTPCQSARG…RNPGCPRTWR (660 aa). Residues 67 to 80 are compositionally biased toward gly residues; the sequence is RPGGGNRVGAGRGR. Positions 104-116 are enriched in polar residues; the sequence is SNPTGGCSDPQRS. Repeat copies occupy residues 149–273, 274–398, 399–523, and 524–648. The segment at 149-648 is 4 X 125 AA tandem repeats; the sequence is SARNPGCPRT…THRRPPGCPR (500 aa). 4 stretches are compositionally biased toward low complexity: residues 177 to 196, 302 to 321, 427 to 446, and 552 to 571; these read RPSG…GTPA.

This is an uncharacterized protein from Homo sapiens (Human).